Here is a 318-residue protein sequence, read N- to C-terminus: Olfactory receptor 13C5 (318 aa).

The Extracellular segment spans residues 1 to 25; sequence MEWENHTILVEFFLKGLSGHPRLEL. A glycan (N-linked (GlcNAc...) asparagine) is linked at Asn-5. A helical transmembrane segment spans residues 26–46; sequence LFFVLIFIMYVVILLGNGTLI. At 47-54 the chain is on the cytoplasmic side; it reads LISILDPH. A helical membrane pass occupies residues 55 to 75; that stretch reads LHTPMYFFLGNLSFLDICYTT. Over 76–99 the chain is Extracellular; sequence TSIPSTLVSFLSERKTISLSGCAV. The cysteines at positions 97 and 189 are disulfide-linked. The chain crosses the membrane as a helical span at residues 100–120; sequence QMFLSLAMGTTECVLLGVMAF. The Cytoplasmic segment spans residues 121 to 139; that stretch reads DRYVAICNPLRYPIIMSKD. A helical membrane pass occupies residues 140–160; sequence AYVPMAAGSWIIGAVNSAVQT. The Extracellular segment spans residues 161–197; it reads VFVVQLPFCRNNIINHFTCEILAVMKLACADISGNEF. A helical transmembrane segment spans residues 198–217; that stretch reads ILLVTTTLFLLTPLLLIIVS. Residues 218 to 237 lie on the Cytoplasmic side of the membrane; that stretch reads YTLIILSIFKISSSEGRSKP. Residues 238–258 traverse the membrane as a helical segment; that stretch reads SSTCSARLTVVITFCGTIFLM. The Extracellular portion of the chain corresponds to 259 to 277; the sequence is YMKPKSQETLNSDDLDATD. A helical transmembrane segment spans residues 278-298; it reads KLIFIFYRVMTPMMNPLIYSL. Residues 299 to 318 lie on the Cytoplasmic side of the membrane; that stretch reads RNKDVKEAVKHLLRRKNFNK.

This sequence belongs to the G-protein coupled receptor 1 family.

It localises to the cell membrane. Its function is as follows. Odorant receptor. The sequence is that of Olfactory receptor 13C5 (OR13C5) from Homo sapiens (Human).